The primary structure comprises 435 residues: Methylenetetrahydrofolate--tRNA-(uracil-5-)-methyltransferase TrmFO (435 aa).

9-14 (GGGLAG) is an FAD binding site.

It belongs to the MnmG family. TrmFO subfamily. The cofactor is FAD.

Its subcellular location is the cytoplasm. It catalyses the reaction uridine(54) in tRNA + (6R)-5,10-methylene-5,6,7,8-tetrahydrofolate + NADH + H(+) = 5-methyluridine(54) in tRNA + (6S)-5,6,7,8-tetrahydrofolate + NAD(+). The catalysed reaction is uridine(54) in tRNA + (6R)-5,10-methylene-5,6,7,8-tetrahydrofolate + NADPH + H(+) = 5-methyluridine(54) in tRNA + (6S)-5,6,7,8-tetrahydrofolate + NADP(+). Its function is as follows. Catalyzes the folate-dependent formation of 5-methyl-uridine at position 54 (M-5-U54) in all tRNAs. The polypeptide is Methylenetetrahydrofolate--tRNA-(uracil-5-)-methyltransferase TrmFO (Citrifermentans bemidjiense (strain ATCC BAA-1014 / DSM 16622 / JCM 12645 / Bem) (Geobacter bemidjiensis)).